The primary structure comprises 83 residues: Bowman-Birk type seed trypsin and chymotrypsin inhibitor (83 aa).

Cystine bridges form between Cys18–Cys72, Cys19–Cys34, Cys22–Cys68, Cys24–Cys32, Cys42–Cys49, Cys46–Cys61, and Cys51–Cys59.

Belongs to the Bowman-Birk serine protease inhibitor family.

This is Bowman-Birk type seed trypsin and chymotrypsin inhibitor from Vigna unguiculata (Cowpea).